A 264-amino-acid chain; its full sequence is Acetylglutamate kinase (264 aa).

Substrate-binding positions include 50–51, arginine 72, and asparagine 164; that span reads GG.

It belongs to the acetylglutamate kinase family. ArgB subfamily.

The protein resides in the cytoplasm. The enzyme catalyses N-acetyl-L-glutamate + ATP = N-acetyl-L-glutamyl 5-phosphate + ADP. It participates in amino-acid biosynthesis; L-arginine biosynthesis; N(2)-acetyl-L-ornithine from L-glutamate: step 2/4. In terms of biological role, catalyzes the ATP-dependent phosphorylation of N-acetyl-L-glutamate. This chain is Acetylglutamate kinase, found in Moritella profunda.